Here is a 164-residue protein sequence, read N- to C-terminus: NADH-quinone oxidoreductase subunit C (164 aa).

This sequence belongs to the complex I 30 kDa subunit family. NDH-1 is composed of 14 different subunits. Subunits NuoB, C, D, E, F, and G constitute the peripheral sector of the complex.

Its subcellular location is the cell inner membrane. The catalysed reaction is a quinone + NADH + 5 H(+)(in) = a quinol + NAD(+) + 4 H(+)(out). NDH-1 shuttles electrons from NADH, via FMN and iron-sulfur (Fe-S) centers, to quinones in the respiratory chain. The immediate electron acceptor for the enzyme in this species is believed to be ubiquinone. Couples the redox reaction to proton translocation (for every two electrons transferred, four hydrogen ions are translocated across the cytoplasmic membrane), and thus conserves the redox energy in a proton gradient. This is NADH-quinone oxidoreductase subunit C from Geotalea uraniireducens (strain Rf4) (Geobacter uraniireducens).